The following is a 419-amino-acid chain: Oxamate carbamoyltransferase subunit AllG (419 aa).

This sequence belongs to the AllG family. In terms of assembly, the OXTCase is composed of 3 subunits, AllF, AllG and AllH. Mg(2+) serves as cofactor.

The catalysed reaction is oxamate + carbamoyl phosphate = N-carbamoyl-2-oxoglycine + phosphate. It functions in the pathway nitrogen metabolism; (S)-allantoin degradation. In terms of biological role, component of a carbamoyltransferase involved in the anaerobic nitrogen utilization via the assimilation of allantoin. Catalyzes the conversion of oxalurate (N-carbamoyl-2-oxoglycine) to oxamate and carbamoyl phosphate. This chain is Oxamate carbamoyltransferase subunit AllG, found in Escherichia coli (strain K12).